Here is a 347-residue protein sequence, read N- to C-terminus: Eukaryotic translation initiation factor 3 subunit I (347 aa).

5 WD repeats span residues 8-47 (GHER…RLGT), 50-89 (DHSG…AVHS), 150-190 (EQAT…VQAK), 192-233 (IHEK…KTYK), and 289-328 (GHFG…FDFK).

This sequence belongs to the eIF-3 subunit I family. In terms of assembly, component of the eukaryotic translation initiation factor 3 (eIF-3) complex.

It is found in the cytoplasm. In terms of biological role, component of the eukaryotic translation initiation factor 3 (eIF-3) complex, which is involved in protein synthesis of a specialized repertoire of mRNAs and, together with other initiation factors, stimulates binding of mRNA and methionyl-tRNAi to the 40S ribosome. The eIF-3 complex specifically targets and initiates translation of a subset of mRNAs involved in cell proliferation. This is Eukaryotic translation initiation factor 3 subunit I from Kluyveromyces lactis (strain ATCC 8585 / CBS 2359 / DSM 70799 / NBRC 1267 / NRRL Y-1140 / WM37) (Yeast).